The chain runs to 82 residues: Small ribosomal subunit protein bS20 (82 aa).

It belongs to the bacterial ribosomal protein bS20 family.

Its function is as follows. Binds directly to 16S ribosomal RNA. This chain is Small ribosomal subunit protein bS20, found in Streptococcus suis (strain 98HAH33).